Consider the following 351-residue polypeptide: Methionine import ATP-binding protein MetN (351 aa).

The 237-residue stretch at 2–238 (IKLNHINKTY…PKHPITRELI (237 aa)) folds into the ABC transporter domain. 35–42 (GYSGAGKS) contacts ATP.

It belongs to the ABC transporter superfamily. Methionine importer (TC 3.A.1.24) family. In terms of assembly, the complex is composed of two ATP-binding proteins (MetN), two transmembrane proteins (MetI) and a solute-binding protein (MetQ).

The protein resides in the cell inner membrane. The catalysed reaction is L-methionine(out) + ATP + H2O = L-methionine(in) + ADP + phosphate + H(+). It catalyses the reaction D-methionine(out) + ATP + H2O = D-methionine(in) + ADP + phosphate + H(+). Functionally, part of the ABC transporter complex MetNIQ involved in methionine import. Responsible for energy coupling to the transport system. The polypeptide is Methionine import ATP-binding protein MetN (Helicobacter hepaticus (strain ATCC 51449 / 3B1)).